Consider the following 552-residue polypeptide: T-box transcription factor TBX4 (552 aa).

Residues 1–14 (MLQDKGLSESEEAF) show a composition bias toward basic and acidic residues. A disordered region spans residues 1 to 50 (MLQDKGLSESEEAFRAPGPALGEASNTSTTNAPEPALATPGLSGAALSSP). A DNA-binding region (T-box) is located at residues 76–256 (LHEKELWKKF…NNPFAKGFRG (181 aa)). At serine 514 the chain carries Phosphoserine.

The protein resides in the nucleus. Transcriptional regulator that has an essential role in the organogenesis of lungs, pelvis, and hindlimbs. The sequence is that of T-box transcription factor TBX4 (Tbx4) from Mus musculus (Mouse).